The primary structure comprises 256 residues: Major prion protein (256 aa).

An N-terminal signal peptide occupies residues 1 to 24 (MVKSHIGSWILVLFVAMWSDVGLC). The interval 25–233 (KKRPKPGGGW…ESQAYYQRGA (209 aa)) is interaction with GRB2, ERI3 and SYN1. Positions 28 to 110 (PKPGGGWNTG…QWNKPSKPKT (83 aa)) are disordered. Tandem repeats lie at residues 54–62 (PQGGGGWGQ), 63–70 (PHGGGWGQ), 71–78 (PHGGGWGQ), 79–86 (PHGGGWGQ), and 87–95 (PHGGGGWGQ). The segment at 54-95 (PQGGGGWGQPHGGGWGQPHGGGWGQPHGGGWGQPHGGGGWGQ) is 5 X 8 AA tandem repeats of P-H-G-G-G-W-G-Q. Residues 55–97 (QGGGGWGQPHGGGWGQPHGGGWGQPHGGGWGQPHGGGGWGQGG) show a composition bias toward gly residues. Cu(2+) contacts are provided by H64, G65, G66, H72, G73, G74, H80, G81, G82, H88, G90, and G91. A disulfide bridge links C182 with C217. N-linked (GlcNAc...) asparagine glycans are attached at residues N184 and N200. The GPI-anchor amidated alanine moiety is linked to residue A233. Positions 234–256 (SVILFSSPPVILLISFLIFLIVG) are cleaved as a propeptide — removed in mature form.

Belongs to the prion family. Monomer and homodimer. Has a tendency to aggregate into amyloid fibrils containing a cross-beta spine, formed by a steric zipper of superposed beta-strands. Soluble oligomers may represent an intermediate stage on the path to fibril formation. Copper binding may promote oligomerization. Interacts with GRB2, APP, ERI3/PRNPIP and SYN1. Mislocalized cytosolically exposed PrP interacts with MGRN1; this interaction alters MGRN1 subcellular location and causes lysosomal enlargement. Interacts with KIAA1191.

It is found in the cell membrane. It localises to the golgi apparatus. Functionally, its primary physiological function is unclear. Has cytoprotective activity against internal or environmental stresses. May play a role in neuronal development and synaptic plasticity. May be required for neuronal myelin sheath maintenance. May play a role in iron uptake and iron homeostasis. Soluble oligomers are toxic to cultured neuroblastoma cells and induce apoptosis (in vitro). Association with GPC1 (via its heparan sulfate chains) targets PRNP to lipid rafts. Also provides Cu(2+) or Zn(2+) for the ascorbate-mediated GPC1 deaminase degradation of its heparan sulfate side chains. This Budorcas taxicolor (Golden takin) protein is Major prion protein (PRNP).